The primary structure comprises 185 residues: Ribosome-recycling factor (185 aa).

This sequence belongs to the RRF family.

The protein localises to the cytoplasm. Functionally, responsible for the release of ribosomes from messenger RNA at the termination of protein biosynthesis. May increase the efficiency of translation by recycling ribosomes from one round of translation to another. The sequence is that of Ribosome-recycling factor from Pseudomonas entomophila (strain L48).